The primary structure comprises 186 residues: TATA box-binding protein-like 1 (186 aa).

This sequence belongs to the TBP family. In terms of assembly, binds TFIIA and TFIIB.

The protein resides in the cytoplasm. Its subcellular location is the nucleus. Functionally, part of a specialized transcription system that mediates the transcription of most ribosomal proteins through the 5'-TCT-3' motif which is a core promoter element at these genes. Seems to also mediate the transcription of NF1. Does not bind the TATA box. This chain is TATA box-binding protein-like 1 (TBPL1), found in Bos taurus (Bovine).